Reading from the N-terminus, the 101-residue chain is Urease subunit beta (101 aa).

Belongs to the urease beta subunit family. In terms of assembly, heterotrimer of UreA (gamma), UreB (beta) and UreC (alpha) subunits. Three heterotrimers associate to form the active enzyme.

It is found in the cytoplasm. The catalysed reaction is urea + 2 H2O + H(+) = hydrogencarbonate + 2 NH4(+). Its pathway is nitrogen metabolism; urea degradation; CO(2) and NH(3) from urea (urease route): step 1/1. This chain is Urease subunit beta, found in Burkholderia vietnamiensis (strain G4 / LMG 22486) (Burkholderia cepacia (strain R1808)).